The sequence spans 166 residues: Protein-export protein SecB (166 aa).

Residues 1-16 (MTDTSAAGNPTPGQQP) are compositionally biased toward polar residues. The tract at residues 1–21 (MTDTSAAGNPTPGQQPANPPS) is disordered.

This sequence belongs to the SecB family. In terms of assembly, homotetramer, a dimer of dimers. One homotetramer interacts with 1 SecA dimer.

It is found in the cytoplasm. In terms of biological role, one of the proteins required for the normal export of preproteins out of the cell cytoplasm. It is a molecular chaperone that binds to a subset of precursor proteins, maintaining them in a translocation-competent state. It also specifically binds to its receptor SecA. In Hyphomonas neptunium (strain ATCC 15444), this protein is Protein-export protein SecB.